A 1328-amino-acid chain; its full sequence is Mitogen-activated protein kinase kinase kinase 19 (1328 aa).

A compositionally biased stretch (basic and acidic residues) spans 1-19 (MSSMPKPERHAESLLDICH). Disordered regions lie at residues 1-28 (MSSM…PTDL), 44-74 (RSEE…QDWQ), 344-380 (VREE…AKNY), and 524-561 (QEND…GPIK). Residues 344-361 (VREEDIDCHGSKTRKPEE) are compositionally biased toward basic and acidic residues. The segment covering 364–377 (SQYLSSRKNESSVA) has biased composition (polar residues). Residues 524–542 (QENDKHKMNSHRSKLDSKT) show a composition bias toward basic and acidic residues. Positions 1061–1324 (WTKGEILGKG…ALQLLKHSFL (264 aa)) constitute a Protein kinase domain. ATP contacts are provided by residues 1067–1075 (LGKGAYGTV) and K1089. D1186 acts as the Proton acceptor in catalysis.

It belongs to the protein kinase superfamily. STE Ser/Thr protein kinase family. STE20 subfamily.

It catalyses the reaction L-seryl-[protein] + ATP = O-phospho-L-seryl-[protein] + ADP + H(+). The enzyme catalyses L-threonyl-[protein] + ATP = O-phospho-L-threonyl-[protein] + ADP + H(+). The polypeptide is Mitogen-activated protein kinase kinase kinase 19 (MAP3K19) (Homo sapiens (Human)).